We begin with the raw amino-acid sequence, 298 residues long: Probable tRNA(His) guanylyltransferase (298 aa).

Positions 58, 59, and 105 each coordinate Mg(2+). GTP contacts are provided by residues Asp58–His63 and Ser104–Asp105.

Belongs to the tRNA(His) guanylyltransferase family. Homotetramer. Interacts with MFN1 and MFN2; functions as a guanyl-nucleotide exchange factor/GEF for MFN2 and also probably MFN1. Mg(2+) is required as a cofactor.

Its subcellular location is the cytoplasm. It localises to the mitochondrion. The enzyme catalyses a 5'-end ribonucleotide-tRNA(His) + GTP + ATP + H2O = a 5'-end phospho-guanosine-ribonucleotide-tRNA(His) + AMP + 2 diphosphate + H(+). Functionally, adds a GMP to the 5'-end of tRNA(His) after transcription and RNase P cleavage. This step is essential for proper recognition of the tRNA and for the fidelity of protein synthesis. Also functions as a guanyl-nucleotide exchange factor/GEF for the MFN1 and MFN2 mitofusins thereby regulating mitochondrial fusion. By regulating both mitochondrial dynamics and bioenergetic function, it contributes to cell survival following oxidative stress. This chain is Probable tRNA(His) guanylyltransferase (Thg1l), found in Mus musculus (Mouse).